Here is a 321-residue protein sequence, read N- to C-terminus: MASSDETIFDLPPYIRVFKDGRVERLHSSPYVPPSLNDPETGVSWKDVPISSKVSARIYLPKISDQQENEEKLPIFVYFHGAGFCLESAFRSFFHTFIKHFVSEAKAIGVSVEYRLAPEHPLPAAYEDCWEALQWVASHVRLDNSSLKRSMDKDPWIINYGDFDRLYLGGDSPGGNIVHNVLLRAGKEKLNGGVKILGAIQYYPYFLIRTSSKQSDYMENDYRCYWKLAYPNAPGGTDNPMINPTVENAPDLAGYGCSRLLISMVADETRDITLLFIEALKKSGWKGQLDVADFEAEFFDLFQTQTEVGKNMIRRLTSFIK.

The Involved in the stabilization of the negatively charged intermediate by the formation of the oxyanion hole motif lies at 80 to 82 (HGA). Catalysis depends on residues serine 172 and aspartate 267.

This sequence belongs to the 'GDXG' lipolytic enzyme family.

It carries out the reaction dihydroprecondylocarpine acetate + NADPH = (+)-vincadifformine + acetate + NADP(+). It participates in alkaloid biosynthesis. Its function is as follows. Component of the seco-iridoid and derivatives monoterpenoid indole alkaloids (MIAs, e.g. vincadifformine) biosynthesis pathway. Catalyzes the conversion of O-acetylstemmadenine (OAS) to vincadifformine. May also trigger the formation of additional unknown MIAs. This Catharanthus roseus (Madagascar periwinkle) protein is Hydrolase 3.